Reading from the N-terminus, the 311-residue chain is Glutaminase (311 aa).

The substrate site is built by Ser-66, Asn-116, Glu-162, Asn-169, Tyr-193, Tyr-245, and Val-263.

This sequence belongs to the glutaminase family. In terms of assembly, homotetramer.

It carries out the reaction L-glutamine + H2O = L-glutamate + NH4(+). This is Glutaminase from Rhodopseudomonas palustris (strain BisB5).